The chain runs to 242 residues: UPF0309 protein BMEA_B0892 (242 aa).

One can recognise an SIS domain in the interval 30–214 (AADLIAAAAR…ARLVGEGDAP (185 aa)).

It belongs to the UPF0309 family.

In Brucella melitensis biotype 2 (strain ATCC 23457), this protein is UPF0309 protein BMEA_B0892.